Here is a 440-residue protein sequence, read N- to C-terminus: uncharacterized protein (440 aa).

Helical transmembrane passes span 26–46 (NGLI…SSTF), 59–79 (FVFW…NGVL), 96–116 (FFLG…LKLK), 138–158 (LTLS…SIYL), 211–231 (FLVF…YLFA), 241–261 (LRKP…VGII), 263–283 (WIII…FVIF), 284–304 (WVIK…SLTI), 394–414 (FLII…SVFI), and 418–438 (IVQI…FTFI).

It to M.pneumoniae MPN_087.

The protein localises to the cell membrane. This is an uncharacterized protein from Mycoplasma pneumoniae (strain ATCC 29342 / M129 / Subtype 1) (Mycoplasmoides pneumoniae).